The chain runs to 431 residues: Maintenance of mitochondrial morphology protein 1 (431 aa).

Topologically, residues 1–103 are lumenal; the sequence is MVSALEVKSI…QLISWSFAQG (103 aa). A helical transmembrane segment spans residues 104-124; the sequence is LIIGQLSVVIFLIFFVKFFIF. Topologically, residues 125-431 are cytoplasmic; the sequence is TDASSKMDNP…EDESSKTPHS (307 aa). An SMP-LTD domain is found at 192–404; sequence SAESLDWFNV…EPRFQSVKLP (213 aa). Positions 412-431 are disordered; the sequence is NTREEVIHKTEDESSKTPHS.

Belongs to the MMM1 family. In terms of assembly, homodimer. Component of the ER-mitochondria encounter structure (ERMES) or MDM complex, composed of MMM1, MDM10, MDM12 and MDM34. An MMM1 homodimer associates with one molecule of MDM12 on each side in a pairwise head-to-tail manner, and the SMP-LTD domains of MMM1 and MDM12 generate a continuous hydrophobic tunnel for phospholipid trafficking.

The protein localises to the endoplasmic reticulum membrane. Functionally, component of the ERMES/MDM complex, which serves as a molecular tether to connect the endoplasmic reticulum (ER) and mitochondria. Components of this complex are involved in the control of mitochondrial shape and protein biogenesis, and function in nonvesicular lipid trafficking between the ER and mitochondria. The MDM12-MMM1 subcomplex functions in the major beta-barrel assembly pathway that is responsible for biogenesis of all outer membrane beta-barrel proteins, and acts in a late step after the SAM complex. The MDM10-MDM12-MMM1 subcomplex further acts in the TOM40-specific pathway after the action of the MDM12-MMM1 complex. Essential for establishing and maintaining the structure of mitochondria and maintenance of mtDNA nucleoids. This chain is Maintenance of mitochondrial morphology protein 1, found in Candida glabrata (strain ATCC 2001 / BCRC 20586 / JCM 3761 / NBRC 0622 / NRRL Y-65 / CBS 138) (Yeast).